The chain runs to 749 residues: 5-methyltetrahydropteroyltriglutamate--homocysteine methyltransferase (749 aa).

Residues 18 to 21 and K112 each bind 5-methyltetrahydropteroyltri-L-glutamate; that span reads REWK. L-homocysteine is bound by residues 420–422 and E473; that span reads IGS. L-methionine contacts are provided by residues 420–422 and E473; that span reads IGS. W550 lines the 5-methyltetrahydropteroyltri-L-glutamate pocket. L-homocysteine is bound at residue D588. L-methionine is bound at residue D588. E594 contributes to the 5-methyltetrahydropteroyltri-L-glutamate binding site. H630, C632, and E654 together coordinate Zn(2+). H683 (proton donor) is an active-site residue. C715 contacts Zn(2+).

Belongs to the vitamin-B12 independent methionine synthase family. Requires Zn(2+) as cofactor.

It carries out the reaction 5-methyltetrahydropteroyltri-L-glutamate + L-homocysteine = tetrahydropteroyltri-L-glutamate + L-methionine. The protein operates within amino-acid biosynthesis; L-methionine biosynthesis via de novo pathway; L-methionine from L-homocysteine (MetE route): step 1/1. Catalyzes the transfer of a methyl group from 5-methyltetrahydrofolate to homocysteine resulting in methionine formation. In Staphylococcus haemolyticus (strain JCSC1435), this protein is 5-methyltetrahydropteroyltriglutamate--homocysteine methyltransferase.